The primary structure comprises 224 residues: Non-structural protein V (224 aa).

Polar residues predominate over residues 54–65 (QKNIQHPTASHQ). 2 disordered regions span residues 54 to 94 (QKNI…TQIP) and 150 to 172 (TEFK…GHRR). Positions 170, 189, 193, 205, 207, 210, 214, and 217 each coordinate Zn(2+).

Belongs to the paramyxoviruses V protein family. Interacts with host IFIH1/MDA5 and DHX58/LGP2. Forms with host DDB1, CUL4A, STAT1, STAT2 and STAT3 the mumps virus V-dependent complex (VDC).

Its subcellular location is the virion. The protein resides in the host cytoplasm. Its function is as follows. Plays an essential role in the inhibition of host immune response. Prevents the establishment of cellular antiviral state by blocking interferon-alpha/beta (IFN-alpha/beta) production and signaling pathway. Interacts with host IFIH1/MDA5 and DHX58/LGP2 to inhibit the transduction pathway involved in the activation of IFN-beta promoter, thus protecting the virus against cell antiviral state. Blocks the type I and II interferon signaling pathways by interacting with host STAT1, STAT2 and STAT3, and mediating their ubiquitination and subsequent proteasomal degradation. In Homo sapiens (Human), this protein is Non-structural protein V.